A 225-amino-acid chain; its full sequence is Peptidyl-tRNA hydrolase (225 aa).

Residue Tyr-14 coordinates tRNA. His-19 (proton acceptor) is an active-site residue. TRNA-binding residues include Phe-64, Asn-66, and Asn-112. The tract at residues 187-225 (MQPPKPEKPKGEAKPAAPEAPEAAPDTRSALQRLADRFR) is disordered. Over residues 200 to 210 (KPAAPEAPEAA) the composition is skewed to low complexity.

The protein belongs to the PTH family. In terms of assembly, monomer.

It is found in the cytoplasm. The enzyme catalyses an N-acyl-L-alpha-aminoacyl-tRNA + H2O = an N-acyl-L-amino acid + a tRNA + H(+). In terms of biological role, hydrolyzes ribosome-free peptidyl-tRNAs (with 1 or more amino acids incorporated), which drop off the ribosome during protein synthesis, or as a result of ribosome stalling. Catalyzes the release of premature peptidyl moieties from peptidyl-tRNA molecules trapped in stalled 50S ribosomal subunits, and thus maintains levels of free tRNAs and 50S ribosomes. This is Peptidyl-tRNA hydrolase from Cereibacter sphaeroides (strain ATCC 17025 / ATH 2.4.3) (Rhodobacter sphaeroides).